The chain runs to 970 residues: Disease resistance protein RGA2 (970 aa).

One can recognise an NB-ARC domain in the interval 135–438; that stretch reads RQAVRRETGS…MAHGFLLSKG (304 aa). ATP is bound at residue 182-189; sequence GMGGLGKT. LRR repeat units lie at residues 525–548, 550–571, 573–594, 595–619, 638–662, 672–697, 752–777, 787–811, 813–832, 833–857, 859–882, 884–906, 907–931, and 946–970; these read FISLRVLNLGDSTFNKLPSSIGDL, HLRYLNLYGSGMRSLPKQLCKL, NLQTLDLQYCTKLCCLPKETSK, LGSLRNLLLDGSQSLTCMPPRIGSL, LGELGNLNLYGSIKISHLERVKNDK, KGNLHSLSMSWNNFGPHIYESEEVKV, LPCLESLELHWGSADVEYVEEVDIDV, FPSLRKLDIWDFGSLKGLLKKEGEE, FPVLEEMIIHECPFLTLSSN, LRALTSLRICYNKVATSFPEEMFKN, ANLKYLTISRCNNLKELPTSLASL, ALKSLKIQLCCALESLPEEGLEG, LSSLTELFVEHCNMLKCLPEGLQHL, and IKRCEKGIGEDWHKISHIPNVNIYI.

The protein belongs to the disease resistance NB-LRR family.

Its function is as follows. Disease resistance protein. Resistance proteins guard the plant against pathogens that contain an appropriate avirulence protein via a direct or indirect interaction with this avirulence protein. That triggers a defense system which restricts the pathogen growth. Confers a broad resistance to all known races of P.infestans. The chain is Disease resistance protein RGA2 (RGA2) from Solanum bulbocastanum (Wild potato).